A 272-amino-acid chain; its full sequence is 1,4-dihydroxy-2-naphthoyl-CoA synthase (272 aa).

Residues Arg33, 72–76 (SGGDQ), Tyr84, 116–120 (YAIGG), Thr142, Ser148, Tyr245, and Lys260 contribute to the substrate site. Position 141–143 (141–143 (QTG)) interacts with hydrogencarbonate.

Belongs to the enoyl-CoA hydratase/isomerase family. MenB subfamily. The cofactor is hydrogencarbonate.

The catalysed reaction is 2-succinylbenzoyl-CoA + H(+) = 1,4-dihydroxy-2-naphthoyl-CoA + H2O. The protein operates within quinol/quinone metabolism; 1,4-dihydroxy-2-naphthoate biosynthesis; 1,4-dihydroxy-2-naphthoate from chorismate: step 6/7. It functions in the pathway quinol/quinone metabolism; menaquinone biosynthesis. Converts o-succinylbenzoyl-CoA (OSB-CoA) to 1,4-dihydroxy-2-naphthoyl-CoA (DHNA-CoA). The protein is 1,4-dihydroxy-2-naphthoyl-CoA synthase of Staphylococcus epidermidis (strain ATCC 35984 / DSM 28319 / BCRC 17069 / CCUG 31568 / BM 3577 / RP62A).